The primary structure comprises 408 residues: Secreted effector protein SseJ (408 aa).

The Nucleophile role is filled by S151. Catalysis depends on residues D381 and H384.

This sequence belongs to the 'GDSL' lipolytic enzyme family. Interacts with RhoA and indirectly with SifA.

The protein localises to the secreted. The protein resides in the host cytoplasm. In terms of biological role, effector proteins function to alter host cell physiology and promote bacterial survival in host tissues. This protein is required for endosomal tubulation and negatively regulates the formation of Salmonella-induced filaments (Sifs) in epithelial cells. Has both deacylase and esterification activities in vitro, but esterification is probably the dominant activity in host cells. Significantly contributes to cholesterol esterification, which reduces cellular cholesterol in cells and abrogates the ability of SifA to associate with cholesterol and LAMP-1 vesicles. This chain is Secreted effector protein SseJ (sseJ), found in Salmonella typhimurium (strain LT2 / SGSC1412 / ATCC 700720).